The chain runs to 488 residues: MPRTRTPLAAIVLAAGKGTRMKSNKAKVLHEVAGRPLAYYPVKRALELGASPVVVVVGHQAEAVEAALSAALPEAPLRFAVQEQQLGTAHAVLAAKRALRGYRGPVLILSGDTPLLRAETLEAVVSAGRRARAAVSLATMTLEVPRGYGRVVRDARGRPARIVEEKDATEAERAVREVNAGLYCVDAELLWKKLAKVGTANAQREFYLTDLVPMAAQAGGVAGVEVPAEEASGVNDRVELSRANRVMVGRLAEAFMRAGVTIEDPARFDCDEGVEIGADAVIEPNVRLRGRTRVGARTRVGVGAVITDGVLADGVTVNPYTVISEAQVAEGAILGPFSRLRPGADIGPEAHVGNFVEVKKSRLGKGAKANHLAYLGDAEIGAGANIGAGTITCNYDGERKNPTRIGEGAFIGSDSILVAPIEIGAGAYVAAGSTLTDPVPAGALALGRARQVTKEGWVAQRQAEKQMKGTATGPASARKGRPAARRAS.

The tract at residues 1-237 (MPRTRTPLAA…AEEASGVNDR (237 aa)) is pyrophosphorylase. UDP-N-acetyl-alpha-D-glucosamine-binding positions include 13–16 (LAAG), Lys-27, Gln-82, 87–88 (GT), 110–112 (SGD), Gly-149, Glu-164, Asn-179, and Asn-235. Asp-112 provides a ligand contact to Mg(2+). Position 235 (Asn-235) interacts with Mg(2+). The interval 238–258 (VELSRANRVMVGRLAEAFMRA) is linker. The N-acetyltransferase stretch occupies residues 259 to 488 (GVTIEDPARF…KGRPAARRAS (230 aa)). UDP-N-acetyl-alpha-D-glucosamine contacts are provided by Arg-341 and Lys-359. His-371 (proton acceptor) is an active-site residue. Residues Tyr-374 and Asn-385 each coordinate UDP-N-acetyl-alpha-D-glucosamine. Residues Ala-388, 394–395 (NY), Ser-413, Ala-431, and Arg-448 contribute to the acetyl-CoA site. The segment at 459-488 (AQRQAEKQMKGTATGPASARKGRPAARRAS) is disordered. The segment covering 478–488 (RKGRPAARRAS) has biased composition (basic residues).

It in the N-terminal section; belongs to the N-acetylglucosamine-1-phosphate uridyltransferase family. The protein in the C-terminal section; belongs to the transferase hexapeptide repeat family. Homotrimer. Mg(2+) serves as cofactor.

Its subcellular location is the cytoplasm. It carries out the reaction alpha-D-glucosamine 1-phosphate + acetyl-CoA = N-acetyl-alpha-D-glucosamine 1-phosphate + CoA + H(+). The enzyme catalyses N-acetyl-alpha-D-glucosamine 1-phosphate + UTP + H(+) = UDP-N-acetyl-alpha-D-glucosamine + diphosphate. It functions in the pathway nucleotide-sugar biosynthesis; UDP-N-acetyl-alpha-D-glucosamine biosynthesis; N-acetyl-alpha-D-glucosamine 1-phosphate from alpha-D-glucosamine 6-phosphate (route II): step 2/2. Its pathway is nucleotide-sugar biosynthesis; UDP-N-acetyl-alpha-D-glucosamine biosynthesis; UDP-N-acetyl-alpha-D-glucosamine from N-acetyl-alpha-D-glucosamine 1-phosphate: step 1/1. It participates in bacterial outer membrane biogenesis; LPS lipid A biosynthesis. In terms of biological role, catalyzes the last two sequential reactions in the de novo biosynthetic pathway for UDP-N-acetylglucosamine (UDP-GlcNAc). The C-terminal domain catalyzes the transfer of acetyl group from acetyl coenzyme A to glucosamine-1-phosphate (GlcN-1-P) to produce N-acetylglucosamine-1-phosphate (GlcNAc-1-P), which is converted into UDP-GlcNAc by the transfer of uridine 5-monophosphate (from uridine 5-triphosphate), a reaction catalyzed by the N-terminal domain. This chain is Bifunctional protein GlmU, found in Anaeromyxobacter dehalogenans (strain 2CP-1 / ATCC BAA-258).